We begin with the raw amino-acid sequence, 417 residues long: Lissencephaly-1 homolog (417 aa).

In terms of domain architecture, LisH spans 7-39 (QKEELNRAIADYLFANGYVKALNAFREESQLAG). The stretch at 54–86 (TSVIRLQKKVMDLEAKLNEAEKEFQSMQNAIGF) forms a coiled coil. WD repeat units lie at residues 120–159 (GHRS…FEHT), 162–203 (GHTD…KTLT), 204–243 (GHDH…CTKT), 246–285 (GHTE…CQVV), 288–340 (GHEH…CLFV), 343–382 (GHDN…CHKT), and 385–417 (AHSH…WDCR).

The protein belongs to the WD repeat LIS1/nudF family.

It localises to the cytoplasm. Its subcellular location is the cytoskeleton. The protein resides in the microtubule organizing center. It is found in the centrosome. Functionally, positively regulates the activity of the minus-end directed microtubule motor protein dynein. May enhance dynein-mediated microtubule sliding by targeting dynein to the microtubule plus end. Required for several dynein- and microtubule-dependent processes. This Schistosoma mansoni (Blood fluke) protein is Lissencephaly-1 homolog.